We begin with the raw amino-acid sequence, 104 residues long: uncharacterized protein (104 aa).

The next 2 membrane-spanning stretches (helical) occupy residues 53-73 and 74-94; these read IWGI…NWDF and ILNL…LILI.

The protein resides in the cell membrane. This is an uncharacterized protein from Methanocaldococcus jannaschii (strain ATCC 43067 / DSM 2661 / JAL-1 / JCM 10045 / NBRC 100440) (Methanococcus jannaschii).